Reading from the N-terminus, the 434-residue chain is Eukaryotic translation initiation factor 3 subunit E-1 (434 aa).

The PCI domain occupies 219–392 (FFNHPKGRDL…GHVVMGTQPL (174 aa)).

Belongs to the eIF-3 subunit E family. Component of the eukaryotic translation initiation factor 3 (eIF-3) complex. The eIF-3 complex interacts with pix. Interacts with mxt.

It localises to the cytoplasm. In terms of biological role, component of the eukaryotic translation initiation factor 3 (eIF-3) complex, which is involved in protein synthesis of a specialized repertoire of mRNAs and, together with other initiation factors, stimulates binding of mRNA and methionyl-tRNAi to the 40S ribosome. The eIF-3 complex specifically targets and initiates translation of a subset of mRNAs involved in cell proliferation. In Drosophila willistoni (Fruit fly), this protein is Eukaryotic translation initiation factor 3 subunit E-1 (eIF3-S6-1).